The following is a 300-amino-acid chain: D-alanine--D-alanine ligase (300 aa).

The ATP-grasp domain occupies 99–293 (KKILKYANIN…FAELLNSIVK (195 aa)). An ATP-binding site is contributed by 126-181 (IEKIGYPVFVKPNSGGSSVATNLVKDGDGIKEAVELALKYDKEVMIENYTKGEEIT). Residues Asp-248, Glu-260, and Asn-262 each coordinate Mg(2+).

This sequence belongs to the D-alanine--D-alanine ligase family. The cofactor is Mg(2+). Mn(2+) serves as cofactor.

Its subcellular location is the cytoplasm. It catalyses the reaction 2 D-alanine + ATP = D-alanyl-D-alanine + ADP + phosphate + H(+). It participates in cell wall biogenesis; peptidoglycan biosynthesis. Functionally, cell wall formation. This is D-alanine--D-alanine ligase from Clostridium botulinum (strain 657 / Type Ba4).